A 327-amino-acid chain; its full sequence is Delta-aminolevulinic acid dehydratase (327 aa).

The Zn(2+) site is built by cysteine 119, cysteine 121, and cysteine 129. Residue lysine 198 is the Schiff-base intermediate with substrate of the active site. Arginine 208 and arginine 220 together coordinate 5-aminolevulinate. A Mg(2+)-binding site is contributed by glutamate 236. Lysine 251 acts as the Schiff-base intermediate with substrate in catalysis. Serine 277 and tyrosine 316 together coordinate 5-aminolevulinate.

Belongs to the ALAD family. Homooctamer. Requires Zn(2+) as cofactor.

It catalyses the reaction 2 5-aminolevulinate = porphobilinogen + 2 H2O + H(+). Its pathway is porphyrin-containing compound metabolism; protoporphyrin-IX biosynthesis; coproporphyrinogen-III from 5-aminolevulinate: step 1/4. In terms of biological role, catalyzes an early step in the biosynthesis of tetrapyrroles. Binds two molecules of 5-aminolevulinate per subunit, each at a distinct site, and catalyzes their condensation to form porphobilinogen. The chain is Delta-aminolevulinic acid dehydratase (hemB) from Synechocystis sp. (strain ATCC 27184 / PCC 6803 / Kazusa).